A 302-amino-acid chain; its full sequence is Glycine--tRNA ligase alpha subunit (302 aa).

The protein belongs to the class-II aminoacyl-tRNA synthetase family. As to quaternary structure, tetramer of two alpha and two beta subunits.

It localises to the cytoplasm. The enzyme catalyses tRNA(Gly) + glycine + ATP = glycyl-tRNA(Gly) + AMP + diphosphate. In Wigglesworthia glossinidia brevipalpis, this protein is Glycine--tRNA ligase alpha subunit.